The chain runs to 354 residues: RH-like protein (354 aa).

The next 8 membrane-spanning stretches (helical) occupy residues 11-31 (GCLP…FFFF), 45-65 (VATY…LGFL), 77-97 (VAFN…LDGF), 125-145 (ISVG…MVLV), 167-187 (VNIM…AWCL), 209-229 (AMLG…ALLT), 238-258 (VFNT…VSSL), and 287-307 (LISS…ISIG).

It belongs to the ammonium transporter (TC 2.A.49) family. Rh subfamily.

It is found in the membrane. In terms of biological role, may be part of an oligomeric complex which is likely to have a transport or channel function in the erythrocyte membrane. The chain is RH-like protein from Hylobates pileatus (Pileated gibbon).